The sequence spans 517 residues: Tyrosine-protein kinase Src42A (517 aa).

Residues 1–47 (MGNCLTTQKGEPDKPADRIKLDDPPTIGVGVGVPQIPMPSHAGQPPE) form a disordered region. A compositionally biased stretch (basic and acidic residues) spans 10–23 (GEPDKPADRIKLDD). Residues 63 to 124 (ANAKIFVALY…PSNYVAKLKS (62 aa)) enclose the SH3 domain. The SH2 domain occupies 130-222 (WYFRKIKRIE…GLCVNLCKPC (93 aa)). Residues 248-504 (LKFVRKLGSG…TLQWKLEDFY (257 aa)) enclose the Protein kinase domain. ATP contacts are provided by residues 254 to 262 (LGSGQFGDV) and Lys-276. The active-site Proton acceptor is Asp-370.

This sequence belongs to the protein kinase superfamily. Tyr protein kinase family. SRC subfamily. In terms of tissue distribution, ubiquitous in early embryos, in stages 13-16 expression is seen in visceral mesoderm, hindgut, brain, anal pads and ventral ganglions. In larvae, expression is in CNS, wing disk, leg disk and photoreceptor precursors in the eye-antenna disks posterior to the morphogenetic furrow.

The enzyme catalyses L-tyrosyl-[protein] + ATP = O-phospho-L-tyrosyl-[protein] + ADP + H(+). Functionally, required directly or indirectly for the phosphorylation of drpr which is necessary for the interaction of drpr with shark and subsequent glial phagocytic activity. Together with drpr and shark, promotes the migration of macrophages to sites of wounding as part of a signaling cascade where Src42A detects production of hydrogen peroxide at wound sites which triggers phosphorylation of drpr and subsequent recruitment and activation of shark. Essential for correct eye morphogenesis (ommatidial R7 neuron formation) which requires the Ras1/MAPK signal transduction pathway. May be involved in the regulation of cytoskeleton organization and cell-cell contacts in developing ommatidia. Involved in phosphorylation of Dscam1, a cell surface receptor involved in targeting of growing axons during eye morphogenesis, and its interaction partner the SH2/SH3 adapter protein dock/dreadlocks. During embryogenesis, involved in regulation of dorsal closure where it may have a role in activating the JNK pathway in leading edge cells during this process. The sequence is that of Tyrosine-protein kinase Src42A from Drosophila melanogaster (Fruit fly).